Here is a 739-residue protein sequence, read N- to C-terminus: Protein NPGR2 (739 aa).

A disordered region spans residues 32–71; that stretch reads EQMRHREEEDKKSEVGVGRDYNGSSALSTAESENAKKLDN. A compositionally biased stretch (basic and acidic residues) spans 33–45; it reads QMRHREEEDKKSE. Residues 53 to 63 are compositionally biased toward polar residues; that stretch reads NGSSALSTAES. TPR repeat units lie at residues 90-127, 162-195, 215-248, 465-498, 500-533, 536-569, 592-625, 626-659, and 697-733; these read EEARALLGRIEYQKGNIEAALRVFEGIDINGITVKMKT, FEAIFLKAKSLQRLGRFQEAAESCRVILDIVETS, TKAVELLPELWKLADSPRDAILSYRRALLNHWKL, PRVVHRLALENAEQRKLDSALAYAKEALKLGAES, LEVWLLLARVLSAQKRFSDAETIVDAALNETGKW, GKLLRLKAKLRLAKGEVKDAIKTYTQLLALLQVQ, LGTWHDLAHIYINLSQWRDAESCLSRSRLIAPYS, SVRYHIEGVLYNRRGQLEEAMEAFTTALDIDPMH, and HSAWYNLGKMFKAEGSVSSMQEAVECFQAAVTLEETM.

Interacts with calmodulin in a calcium-dependent manner. In terms of tissue distribution, expressed in pollen, flowers and fruits.

The sequence is that of Protein NPGR2 from Arabidopsis thaliana (Mouse-ear cress).